The primary structure comprises 463 residues: A-type ATP synthase subunit B (463 aa).

Belongs to the ATPase alpha/beta chains family. Has multiple subunits with at least A(3), B(3), C, D, E, F, H, I and proteolipid K(x).

The protein localises to the cell membrane. Functionally, component of the A-type ATP synthase that produces ATP from ADP in the presence of a proton gradient across the membrane. The B chain is a regulatory subunit. The sequence is that of A-type ATP synthase subunit B from Methanothrix thermoacetophila (strain DSM 6194 / JCM 14653 / NBRC 101360 / PT) (Methanosaeta thermophila).